Consider the following 477-residue polypeptide: Protoporphyrinogen oxidase (477 aa).

FAD contacts are provided by residues 9–14 (GGGISG), 34–35 (ES), W42, 57–60 (GPRG), V257, A449, and 454–456 (VAV).

This sequence belongs to the protoporphyrinogen/coproporphyrinogen oxidase family. Protoporphyrinogen oxidase subfamily. In terms of assembly, monomer. Homodimer. It depends on FAD as a cofactor. As to expression, expressed in heart, brain, placenta, lung, liver, skeletal muscle, kidney and pancreas.

The protein resides in the mitochondrion inner membrane. The catalysed reaction is protoporphyrinogen IX + 3 O2 = protoporphyrin IX + 3 H2O2. Its pathway is porphyrin-containing compound metabolism; protoporphyrin-IX biosynthesis; protoporphyrin-IX from protoporphyrinogen-IX: step 1/1. Catalyzes the 6-electron oxidation of protoporphyrinogen-IX to form protoporphyrin-IX. This Homo sapiens (Human) protein is Protoporphyrinogen oxidase (PPOX).